The chain runs to 215 residues: Protein Syd (215 aa).

This sequence belongs to the Syd family.

It localises to the cell inner membrane. Interacts with the SecY protein in vivo. May bind preferentially to an uncomplexed state of SecY, thus functioning either as a chelating agent for excess SecY in the cell or as a regulatory factor that negatively controls the translocase function. This Shewanella piezotolerans (strain WP3 / JCM 13877) protein is Protein Syd.